The following is a 166-amino-acid chain: NADH-quinone oxidoreductase subunit E (166 aa).

Cys-92, Cys-97, Cys-133, and Cys-137 together coordinate [2Fe-2S] cluster.

The protein belongs to the complex I 24 kDa subunit family. As to quaternary structure, composed of 13 different subunits. Subunits NuoCD, E, F, and G constitute the peripheral sector of the complex. The cofactor is [2Fe-2S] cluster.

The enzyme catalyses a quinone + NADH + 5 H(+)(in) = a quinol + NAD(+) + 4 H(+)(out). NDH-1 shuttles electrons from NADH, via FMN and iron-sulfur (Fe-S) centers, to quinones in the respiratory chain. The immediate electron acceptor for the enzyme in this species is believed to be ubiquinone. Couples the redox reaction to proton translocation (for every two electrons transferred, four hydrogen ions are translocated across the cytoplasmic membrane), and thus conserves the redox energy in a proton gradient. The sequence is that of NADH-quinone oxidoreductase subunit E (nuoE) from Shigella flexneri.